The primary structure comprises 549 residues: MSRRQTCSLLLIAFGLFYLVPLSNHGLWIPDETRYAQISQAMLLGGDWVSPHFLGLRYFEKPVAGYWMIALGQAVFGENLFGVRIASVVATALSVLLAYLLARRLWRDPRTSLACALLYASFGLIAGQSGYANLDPQFTFWVNLSLVALWHALDARSRRARLLGWTLLGLACGMGFLTKGFLAWLLPVLVALPYMLWQRRWRELLGYGALAVLAALLVCLPWALAVHAREADYWRFFFWHEHIRRFAGEDAQHSRPWWFYLPLLAVSCLPWSGLLPSALRQAWHERRQAPVVFLALWLLLPLAFFSLSRGKLPTYIMPCLLPLALLMGHALVQRLRLGNSVALRGNGLLNLGLALLALAALAYLQLRKPVYQEEPFELFLVLLVIGAWAAAGLAQWRYPLRAWAAPLLASWVLIALLPAAMPNHVVQNKTPDLFVAEHLDELTGARHLLSNDLGAASALAWRLRRSDVTLYDTRGELKYGLSYPEHSQRSVPLADIRQWLWRARQDGSVAVLLRINSASDRYQLALLPGDGERYRNGNLVLAILPQVRP.

Helical transmembrane passes span 9–29 (LLLIAFGLFYLVPLSNHGLWI), 80–100 (LFGVRIASVVATALSVLLAYL), 112–132 (SLACALLYASFGLIAGQSGYA), 133–153 (NLDPQFTFWVNLSLVALWHAL), 176–196 (FLTKGFLAWLLPVLVALPYML), 204–224 (LLGYGALAVLAALLVCLPWAL), 256–276 (PWWFYLPLLAVSCLPWSGLLP), 288–308 (QAPVVFLALWLLLPLAFFSLS), 312–332 (LPTYIMPCLLPLALLMGHALV), 346–366 (NGLLNLGLALLALAALAYLQL), 376–396 (FELFLVLLVIGAWAAAGLAQW), and 402–422 (AWAAPLLASWVLIALLPAAMP).

This sequence belongs to the glycosyltransferase 83 family.

Its subcellular location is the cell inner membrane. The enzyme catalyses 4-amino-4-deoxy-alpha-L-arabinopyranosyl di-trans,octa-cis-undecaprenyl phosphate + lipid IVA = lipid IIA + di-trans,octa-cis-undecaprenyl phosphate.. It functions in the pathway lipopolysaccharide metabolism; 4-amino-4-deoxy-beta-L-arabinose-lipid A biosynthesis. Catalyzes the transfer of the L-Ara4N moiety of the glycolipid undecaprenyl phosphate-alpha-L-Ara4N to lipid A. The modified arabinose is attached to lipid A and is required for resistance to polymyxin and cationic antimicrobial peptides. The polypeptide is Undecaprenyl phosphate-alpha-4-amino-4-deoxy-L-arabinose arabinosyl transferase (Pseudomonas aeruginosa (strain LESB58)).